The chain runs to 699 residues: Elongation factor G (699 aa).

The tr-type G domain occupies 8-283; sequence EHIRNIGICA…AVVDFLPSPI (276 aa). GTP-binding positions include 17 to 24, 81 to 85, and 135 to 138; these read AHIDAGKT, DTPGH, and NKMD.

This sequence belongs to the TRAFAC class translation factor GTPase superfamily. Classic translation factor GTPase family. EF-G/EF-2 subfamily.

It localises to the cytoplasm. In terms of biological role, catalyzes the GTP-dependent ribosomal translocation step during translation elongation. During this step, the ribosome changes from the pre-translocational (PRE) to the post-translocational (POST) state as the newly formed A-site-bound peptidyl-tRNA and P-site-bound deacylated tRNA move to the P and E sites, respectively. Catalyzes the coordinated movement of the two tRNA molecules, the mRNA and conformational changes in the ribosome. The chain is Elongation factor G from Rickettsia rickettsii (strain Iowa).